The chain runs to 160 residues: Suppressyn (160 aa).

An N-terminal signal peptide occupies residues 1-39 (MACIYPTTFYTSLPTKSLNMGISLTTILILSVAVLLSTA). The tract at residues 137–160 (AKASKPTTPPENRPRHFHSFIQKL) is disordered.

As to quaternary structure, interacts (secreted) with SLC1A5; mainly at cell surface. In terms of tissue distribution, specifically expressed in placenta by extravillous trophoblasts and syncytiotrophoblasts (at protein level).

The protein resides in the secreted. In terms of biological role, may play a role in trophoblasts syncytialization, the spontaneous fusion of their plasma membranes, an essential process in placental development. May negatively regulate cell-cell fusion by interacting with SLC1A5, the probable receptor on the cell surface of the fusogenic syncytin-1/ERVW-1. The polypeptide is Suppressyn (ERVH48-1) (Homo sapiens (Human)).